Here is a 360-residue protein sequence, read N- to C-terminus: Peptide chain release factor 1 (360 aa).

At Gln-237 the chain carries N5-methylglutamine.

Belongs to the prokaryotic/mitochondrial release factor family. Methylated by PrmC. Methylation increases the termination efficiency of RF1.

It localises to the cytoplasm. Peptide chain release factor 1 directs the termination of translation in response to the peptide chain termination codons UAG and UAA. This chain is Peptide chain release factor 1, found in Pseudomonas putida (strain W619).